Reading from the N-terminus, the 201-residue chain is Ras-related protein Rab-9B (201 aa).

GTP-binding residues include Val18, Gly19, Lys20, Ser21, Ser22, Asp33, Ser34, Ala36, His38, and Thr39. Residue Ser21 participates in Mg(2+) binding. The Switch 1 motif lies at 31 to 42; it reads KFDSQAFHTIGV. Residue Ser34 is modified to Phosphoserine. Mg(2+) contacts are provided by Thr39 and Asp62. A Switch 2 motif is present at residues 64-78; the sequence is AGQERFKSLRTPFYR. Residues Gly65, Asn124, Lys125, Ala155, and Lys156 each coordinate GTP. Residues Cys200 and Cys201 are each lipidated (S-geranylgeranyl cysteine).

Belongs to the small GTPase superfamily. Rab family. As to quaternary structure, interacts (GTP-bound form) with SGSM1; the GDP-bound form has much lower affinity for SGSM1. The GTP-bound form but not the GDP-bound form interacts with HPS4 and the BLOC-3 complex (heterodimer of HPS1 and HPS4) but does not interact with HPS1 alone. Interacts (GTP-bound form) with NDE1. Mg(2+) serves as cofactor. In terms of tissue distribution, ubiquitous.

It is found in the cell membrane. It localises to the cytoplasmic vesicle. The protein localises to the phagosome. Its subcellular location is the phagosome membrane. It carries out the reaction GTP + H2O = GDP + phosphate + H(+). Its activity is regulated as follows. Regulated by guanine nucleotide exchange factors (GEFs) which promote the exchange of bound GDP for free GTP. Regulated by GTPase activating proteins (GAPs) which increase the GTP hydrolysis activity. Inhibited by GDP dissociation inhibitors (GDIs). The small GTPases Rab are key regulators of intracellular membrane trafficking, from the formation of transport vesicles to their fusion with membranes. Rabs cycle between an inactive GDP-bound form and an active GTP-bound form that is able to recruit to membranes different sets of downstream effectors directly responsible for vesicle formation, movement, tethering and fusion. RAB9B is involved in the transport of proteins between the endosomes and the trans Golgi network. May use NDE1/NDEL1 as an effector to interact with the dynein motor complex in order to control retrograde trafficking of RAB9-associated late endosomes to the TGN. This is Ras-related protein Rab-9B from Homo sapiens (Human).